The following is a 469-amino-acid chain: uncharacterized protein (469 aa).

A run of 3 helical transmembrane segments spans residues 42–62 (DVII…AYVI), 179–199 (IVLP…VTPS), and 249–269 (NLKY…GLFV).

The protein localises to the cell membrane. This is an uncharacterized protein from Methanocaldococcus jannaschii (strain ATCC 43067 / DSM 2661 / JAL-1 / JCM 10045 / NBRC 100440) (Methanococcus jannaschii).